Consider the following 468-residue polypeptide: Aldehyde dehydrogenase family 3 member B1 (468 aa).

Met1 carries the post-translational modification N-acetylmethionine. 188 to 193 (GNPQVG) contacts NAD(+). Active-site residues include Glu210 and Cys244. A lipid anchor (S-palmitoyl cysteine) is attached at Cys463. Cys465 carries the cysteine methyl ester modification. Cys465 carries S-geranylgeranyl cysteine lipidation. A propeptide spans 466–468 (TLL) (removed in mature form).

The protein belongs to the aldehyde dehydrogenase family. Post-translationally, dually lipidated in the C-terminus; prenylation occurs prior to, and is a prerequisite for palmitoylation. It is also required for activity towards long-chain substrates.

It is found in the cell membrane. It carries out the reaction an aldehyde + NAD(+) + H2O = a carboxylate + NADH + 2 H(+). It catalyses the reaction a long-chain fatty aldehyde + NAD(+) + H2O = a long-chain fatty acid + NADH + 2 H(+). The catalysed reaction is a medium-chain fatty aldehyde + NAD(+) + H2O = a medium-chain fatty acid + NADH + 2 H(+). The enzyme catalyses octanal + NAD(+) + H2O = octanoate + NADH + 2 H(+). It carries out the reaction nonanal + NAD(+) + H2O = nonanoate + NADH + 2 H(+). It catalyses the reaction hexadecanoate + NADH + 2 H(+) = hexadecanal + NAD(+) + H2O. The catalysed reaction is (2E)-octenal + NAD(+) + H2O = (2E)-octenoate + NADH + 2 H(+). The enzyme catalyses (E)-non-2-enal + NAD(+) + H2O = (E)-non-2-enoate + NADH + 2 H(+). It carries out the reaction (E)-4-hydroxynon-2-enal + NAD(+) + H2O = (E)-4-hydroxynon-2-enoate + NADH + 2 H(+). It catalyses the reaction (2E)-hexadecenal + NAD(+) + H2O = (E)-hexadec-2-enoate + NADH + 2 H(+). The catalysed reaction is benzaldehyde + NAD(+) + H2O = benzoate + NADH + 2 H(+). The enzyme catalyses an aldehyde + NADP(+) + H2O = a carboxylate + NADPH + 2 H(+). It carries out the reaction a medium-chain fatty aldehyde + NADP(+) + H2O = a medium-chain fatty acid + NADPH + 2 H(+). It catalyses the reaction hexanal + NADP(+) + H2O = hexanoate + NADPH + 2 H(+). The catalysed reaction is octanal + NADP(+) + H2O = octanoate + NADPH + 2 H(+). The enzyme catalyses nonanal + NADP(+) + H2O = nonanoate + NADPH + 2 H(+). It carries out the reaction (2E)-octenal + NADP(+) + H2O = (2E)-octenoate + NADPH + 2 H(+). It catalyses the reaction (E)-non-2-enal + NADP(+) + H2O = (E)-non-2-enoate + NADPH + 2 H(+). The catalysed reaction is (E)-4-hydroxynon-2-enal + NADP(+) + H2O = (E)-4-hydroxynon-2-enoate + NADPH + 2 H(+). The enzyme catalyses benzaldehyde + NADP(+) + H2O = benzoate + NADPH + 2 H(+). It functions in the pathway alcohol metabolism; ethanol degradation; acetate from ethanol: step 2/2. In terms of biological role, oxidizes medium and long chain saturated and unsaturated fatty aldehydes generated in the plasma membrane into non-toxic fatty acids. May have a protective role against the cytotoxicity induced by lipid peroxidation. Short-chain fatty aldehydes are not good substrates. Can use both NADP(+) and NAD(+) as electron acceptor in vitro, however in vivo preference will depend on their tissue levels. Low activity towards acetaldehyde and 3,4-dihydroxyphenylacetaldehyde. Able to metabolize aromatic aldehydes such as benzaldehyde to their acid form. In Bos taurus (Bovine), this protein is Aldehyde dehydrogenase family 3 member B1 (ALDH3B1).